We begin with the raw amino-acid sequence, 429 residues long: Dihydroorotase (429 aa).

Zn(2+) contacts are provided by histidine 61 and histidine 63. Residues histidine 63–arginine 65 and asparagine 95 each bind substrate. 3 residues coordinate Zn(2+): aspartate 153, histidine 180, and histidine 233. Asparagine 279 contributes to the substrate binding site. Aspartate 306 lines the Zn(2+) pocket. Aspartate 306 is a catalytic residue. Substrate contacts are provided by residues histidine 310 and phenylalanine 324–glycine 325.

The protein belongs to the metallo-dependent hydrolases superfamily. DHOase family. Class I DHOase subfamily. Zn(2+) is required as a cofactor.

It carries out the reaction (S)-dihydroorotate + H2O = N-carbamoyl-L-aspartate + H(+). Its pathway is pyrimidine metabolism; UMP biosynthesis via de novo pathway; (S)-dihydroorotate from bicarbonate: step 3/3. Its function is as follows. Catalyzes the reversible cyclization of carbamoyl aspartate to dihydroorotate. The sequence is that of Dihydroorotase from Ligilactobacillus salivarius (strain UCC118) (Lactobacillus salivarius).